A 633-amino-acid polypeptide reads, in one-letter code: NADPH-dependent diflavin oxidoreductase 1 (633 aa).

The Flavodoxin-like domain maps to 5 to 149 (CTIIYATESG…EVEKWSQELI (145 aa)). Residues 11-16 (TESGTS), 58-61 (STTG), and D131 each bind FMN. In terms of domain architecture, FAD-binding FR-type spans 196-442 (TQFYKSKLKV…FIKESGARLP (247 aa)). FAD contacts are provided by residues 377–380 (RPFS) and 412–415 (GLCS). NADP(+) is bound by residues T456, 520–521 (SR), 528–532 (KVYVQ), and D565. A disordered region spans residues 580 to 610 (KNNNNNNNNNNNNNNNNNNNNNNNNNDDENN). Over residues 581 to 604 (NNNNNNNNNNNNNNNNNNNNNNNN) the composition is skewed to low complexity. FAD is bound at residue W633.

It belongs to the NADPH-dependent diflavin oxidoreductase NDOR1 family. The protein in the N-terminal section; belongs to the flavodoxin family. In the C-terminal section; belongs to the flavoprotein pyridine nucleotide cytochrome reductase family. FAD is required as a cofactor. The cofactor is FMN.

It is found in the cytoplasm. It catalyses the reaction 2 oxidized [2Fe-2S]-[protein] + NADPH = 2 reduced [2Fe-2S]-[protein] + NADP(+) + H(+). Its function is as follows. NADPH-dependent reductase which is a central component of the cytosolic iron-sulfur (Fe-S) protein assembly (CIA) machinery. Transfers electrons from NADPH via its FAD and FMN prosthetic groups to the [2Fe-2S] cluster of the anamorsin/DRE2 homolog, another key component of the CIA machinery. In turn, this reduced cluster provides electrons for assembly of cytosolic iron-sulfur cluster proteins. The polypeptide is NADPH-dependent diflavin oxidoreductase 1 (redC) (Dictyostelium discoideum (Social amoeba)).